We begin with the raw amino-acid sequence, 212 residues long: tRNA(Phe) 7-((3-amino-3-carboxypropyl)-4-demethylwyosine(37)-N(4))-methyltransferase 2 (212 aa).

This sequence belongs to the TYW3 family.

The catalysed reaction is 4-demethyl-7-[(3S)-3-amino-3-carboxypropyl]wyosine(37) in tRNA(Phe) + S-adenosyl-L-methionine = 7-[(3S)-3-amino-3-carboxypropyl]wyosine(37) in tRNA(Phe) + S-adenosyl-L-homocysteine + H(+). Functionally, S-adenosyl-L-methionine-dependent methyltransferase that acts as a component of the wyosine derivatives biosynthesis pathway. Probably methylates N-4 position of wybutosine-86 to produce wybutosine-72. The protein is tRNA(Phe) 7-((3-amino-3-carboxypropyl)-4-demethylwyosine(37)-N(4))-methyltransferase 2 of Thermococcus kodakarensis (strain ATCC BAA-918 / JCM 12380 / KOD1) (Pyrococcus kodakaraensis (strain KOD1)).